A 186-amino-acid chain; its full sequence is Lipid A acyltransferase PagP (186 aa).

The N-terminal stretch at 1–25 is a signal peptide; it reads MNVSKYVAIFSFVFIQLISVGKVFA. Active-site residues include H58, D101, and S102.

The protein belongs to the lipid A palmitoyltransferase family. In terms of assembly, homodimer.

The protein localises to the cell outer membrane. It catalyses the reaction a lipid A + a 1,2-diacyl-sn-glycero-3-phosphocholine = a hepta-acyl lipid A + a 2-acyl-sn-glycero-3-phosphocholine. It carries out the reaction a lipid IVA + a 1,2-diacyl-sn-glycero-3-phosphocholine = a lipid IVB + a 2-acyl-sn-glycero-3-phosphocholine. The catalysed reaction is a lipid IIA + a 1,2-diacyl-sn-glycero-3-phosphocholine = a lipid IIB + a 2-acyl-sn-glycero-3-phosphocholine. Transfers a fatty acid residue from the sn-1 position of a phospholipid to the N-linked hydroxyfatty acid chain on the proximal unit of lipid A or its precursors. The protein is Lipid A acyltransferase PagP of Shigella flexneri serotype X (strain 2002017).